We begin with the raw amino-acid sequence, 232 residues long: Probable proteasome subunit alpha type-3 (232 aa).

It belongs to the peptidase T1A family. As to quaternary structure, the 26S proteasome consists of a 20S proteasome core and two 19S regulatory subunits. The 20S proteasome core is composed of 28 subunits that are arranged in four stacked rings, resulting in a barrel-shaped structure. The two end rings are each formed by seven alpha subunits, and the two central rings are each formed by seven beta subunits. The catalytic chamber with the active sites is on the inside of the barrel.

It is found in the cytoplasm. It localises to the nucleus. In terms of biological role, the proteasome degrades poly-ubiquitinated proteins in the cytoplasm and in the nucleus. It is essential for the regulated turnover of proteins and for the removal of misfolded proteins. The proteasome is a multicatalytic proteinase complex that is characterized by its ability to cleave peptides with Arg, Phe, Tyr, Leu, and Glu adjacent to the leaving group at neutral or slightly basic pH. It has an ATP-dependent proteolytic activity. This Encephalitozoon cuniculi (strain GB-M1) (Microsporidian parasite) protein is Probable proteasome subunit alpha type-3 (PRE9).